Consider the following 55-residue polypeptide: Bowman-Birk type proteinase inhibitor B1 (55 aa).

4 cysteine pairs are disulfide-bonded: cysteine 6/cysteine 53, cysteine 12/cysteine 17, cysteine 26/cysteine 33, and cysteine 30/cysteine 45.

It belongs to the Bowman-Birk serine protease inhibitor family. As to expression, expressed in bulb (at protein level).

In terms of biological role, serine protease inhibitor. Weakly inhibits trypsin (Ki = 167 nM). Does not inhibit bacterial subtilisin or mamallian chymotrypsin. This Hyacinthus orientalis (Common hyacinth) protein is Bowman-Birk type proteinase inhibitor B1.